The primary structure comprises 197 residues: Recombination protein RecR (197 aa).

A C4-type zinc finger spans residues 56–71 (CQQCRNLSETEICGFC). The 96-residue stretch at 79–174 (DQLCIVETPT…SVTRLAQGIP (96 aa)) folds into the Toprim domain.

It belongs to the RecR family.

Functionally, may play a role in DNA repair. It seems to be involved in an RecBC-independent recombinational process of DNA repair. It may act with RecF and RecO. In Hydrogenovibrio crunogenus (strain DSM 25203 / XCL-2) (Thiomicrospira crunogena), this protein is Recombination protein RecR.